The primary structure comprises 912 residues: Non-lysosomal glucosylceramidase (912 aa).

The interval 886 to 912 is disordered; it reads HKKNSSRPAVTQGTAPSQPECGPKRSL. Polar residues predominate over residues 891-902; sequence SRPAVTQGTAPS.

This sequence belongs to the non-lysosomal glucosylceramidase family.

It is found in the endoplasmic reticulum membrane. The protein localises to the golgi apparatus membrane. The catalysed reaction is a beta-D-glucosyl-(1&lt;-&gt;1')-N-acylsphing-4-enine + H2O = an N-acylsphing-4-enine + D-glucose. It carries out the reaction a beta-D-galactosyl-(1&lt;-&gt;1')-N-acylsphing-4-enine + H2O = an N-acylsphing-4-enine + D-galactose. It catalyses the reaction beta-D-glucosyl-(1-&gt;3)-O-lithocholate + H2O = lithocholate + D-glucose. The enzyme catalyses beta-D-glucosyl-(1-&gt;3)-O-chenodeoxycholate + H2O = chenodeoxycholate + D-glucose. The catalysed reaction is a di-trans,poly-cis-dolichyl beta-D-glucosyl phosphate + chenodeoxycholate = beta-D-glucosyl-(1-&gt;3)-O-chenodeoxycholate + a di-trans,poly-cis-dolichyl phosphate + H(+). It carries out the reaction octyl beta-D-glucose + chenodeoxycholate = beta-D-glucosyl-(1-&gt;3)-O-chenodeoxycholate + octan-1-ol. It catalyses the reaction cholesteryl 3-beta-D-glucoside + H2O = cholesterol + D-glucose. The enzyme catalyses a beta-D-glucosyl-(1&lt;-&gt;1')-N-acylsphing-4-enine + cholesterol = cholesteryl 3-beta-D-glucoside + an N-acylsphing-4-enine. The catalysed reaction is beta-D-glucosyl-N-(9Z-octadecenoyl)-sphing-4E-enine + cholesterol = N-(9Z-octadecenoyl)-sphing-4-enine + cholesteryl 3-beta-D-glucoside. It carries out the reaction a beta-D-galactosyl-(1&lt;-&gt;1')-N-acylsphing-4-enine + cholesterol = cholesteryl 3-beta-D-galactoside + an N-acylsphing-4-enine. It catalyses the reaction 1-(beta-D-galactosyl)-N-dodecanoylsphing-4-enine + cholesterol = cholesteryl 3-beta-D-galactoside + N-dodecanoylsphing-4-enine. Its pathway is lipid metabolism; sphingolipid metabolism. It functions in the pathway steroid metabolism; cholesterol metabolism. Enzymatic activity is dependent on membrane association and requires the presence of lipids. In terms of biological role, non-lysosomal glucosylceramidase that catalyzes the hydrolysis of glucosylceramides/GlcCers (such as beta-D-glucosyl-(1&lt;-&gt;1')-N-acylsphing-4-enine) to free glucose and ceramides (such as N-acylsphing-4-enine). GlcCers are membrane glycosphingolipids that have a wide intracellular distribution. They are the main precursors of more complex glycosphingolipids that play a role in cellular growth, differentiation, adhesion, signaling, cytoskeletal dynamics and membrane properties. Involved in the transglucosylation of cholesterol, transfers glucose from GlcCer to cholesterol, thereby modifying its water solubility and biological properties. Under specific conditions, may catalyze the reverse reaction, transferring glucose from cholesteryl-3-beta-D-glucoside to ceramide (such as N-acylsphing-4-enine). May play a role in the metabolism of bile acids. Able to hydrolyze bile acid 3-O-glucosides as well as to produce bile acid-glucose conjugates thanks to a bile acid glucosyl transferase activity. Catalyzes the hydrolysis of galactosylceramides/GalCers (such as beta-D-galactosyl-(1&lt;-&gt;1')-N-acylsphing-4-enine), as well as the galactosyl transfer between GalCers and cholesterol in vitro with lower activity compared with their activity against GlcCers. This chain is Non-lysosomal glucosylceramidase, found in Rattus norvegicus (Rat).